The sequence spans 115 residues: UPF0102 protein SYO3AOP1_0546 (115 aa).

It belongs to the UPF0102 family.

The polypeptide is UPF0102 protein SYO3AOP1_0546 (Sulfurihydrogenibium sp. (strain YO3AOP1)).